Consider the following 535-residue polypeptide: Ribonuclease Y (535 aa).

A helical membrane pass occupies residues 4–24 (IILLIVSALIGLILGYALISI). Residues 118 to 141 (ENLSSKEKVLDSKEQSLTDKSKHI) form a disordered region. One can recognise a KH domain in the interval 225–285 (TITSVHLPDD…IRREIARMTL (61 aa)). The region spanning 351–444 (VLRHSVEVGK…VAAADALSSA (94 aa)) is the HD domain.

The protein belongs to the RNase Y family.

It is found in the cell membrane. Functionally, endoribonuclease that initiates mRNA decay. The polypeptide is Ribonuclease Y (Streptococcus pyogenes serotype M2 (strain MGAS10270)).